The following is a 126-amino-acid chain: Topoisomerase I damage affected protein 2 (126 aa).

The residue at position 2 (serine 2) is an N-acetylserine.

The protein belongs to the TDA2 family.

The protein resides in the cytoplasm. It localises to the cell projection. In Saccharomyces cerevisiae (strain JAY291) (Baker's yeast), this protein is Topoisomerase I damage affected protein 2 (TDA2).